We begin with the raw amino-acid sequence, 23 residues long: Alpha-conotoxin-like RgIB (23 aa).

Intrachain disulfides connect C5/C11 and C6/C19. The lacks the Ser-Xaa-Pro motif that is crucial for potent interaction with nAChR stretch occupies residues 7-9 (KNP).

Expressed by venom duct.

Its subcellular location is the secreted. Functionally, alpha-conotoxins act on postsynaptic membranes, they bind to the nicotinic acetylcholine receptors (nAChR) and thus inhibit them. Is a specific blocker of the alpha-3-beta-4/CHRNA3-CHRNB4 image nAChR and may also block alpha-3-beta-4-alpha-5 (CHRNA3-CHRNB4-CHRNA5) channels. Has possibly a distinct nAChR binding mode from other alpha-conotoxins, due to a different three residue motif (lacks the Ser-Xaa-Pro motif). In vivo, causes hyperactivity and behavioral disorders in mice following intracranial injection. The chain is Alpha-conotoxin-like RgIB from Conus regius (Crown cone).